A 105-amino-acid chain; its full sequence is Large ribosomal subunit protein bL21c (105 aa).

The protein belongs to the bacterial ribosomal protein bL21 family. Part of the 50S ribosomal subunit.

It localises to the plastid. The protein localises to the chloroplast. This protein binds to 23S rRNA. This chain is Large ribosomal subunit protein bL21c, found in Thalassiosira pseudonana (Marine diatom).